The following is a 1075-amino-acid chain: Disheveled-associated activator of morphogenesis 2 (1075 aa).

The region spanning 40–416 (VPIPPTEELN…QIVLQDERGD (377 aa)) is the GBD/FH3 domain. Residues 437-517 (NENEVKQWRD…VAQLNEYSQG (81 aa)) are a coiled coil. Disordered regions lie at residues 517-611 (GGSI…IPQP), 1006-1025 (KEQREKERRQKKAKAGSISE), and 1048-1075 (SKLKRNRKRSGNQGLETSRERVVTKLNY). The segment covering 523 to 532 (PAPPPPPPGG) has biased composition (pro residues). A compositionally biased stretch (low complexity) spans 533–544 (PLALSSALSSAL). Residues 550 to 581 (PPLPPPLPFSSCPPPPAPPPPPGGPPPPPGAP) are compositionally biased toward pro residues. The FH2 domain maps to 605–1075 (KKSIPQPSHP…RERVVTKLNY (471 aa)). One can recognise a DAD domain in the interval 1025–1075 (EETGEFDDLVSALRSGEVFDKDLSKLKRNRKRSGNQGLETSRERVVTKLNY). The span at 1064 to 1075 (TSRERVVTKLNY) shows a compositional bias: basic and acidic residues.

It belongs to the formin homology family. As to expression, expressed in progenitor populations of the embryonic spinal cord (at protein level).

In terms of biological role, key regulator of the Wnt signaling pathway, which is required for various processes during development, such as dorsal patterning, determination of left/right symmetry or myelination in the central nervous system. Acts downstream of Wnt ligands and upstream of beta-catenin (CTNNB1). Required for canonical Wnt signaling pathway during patterning in the dorsal spinal cord by promoting the aggregation of Disheveled (Dvl) complexes, thereby clustering and formation of Wnt receptor signalosomes and potentiating Wnt activity. During dorsal patterning of the spinal cord, inhibits oligodendrocytes differentiation via interaction with PIP5K1A. Also regulates non-canonical Wnt signaling pathway. Acts downstream of PITX2 in the developing gut and is required for left/right asymmetry within dorsal mesentery: affects mesenchymal condensation by lengthening cadherin-based junctions through WNT5A and non-canonical Wnt signaling, inducing polarized condensation in the left dorsal mesentery necessary to initiate gut rotation. Together with DAAM1, required for myocardial maturation and sarcomere assembly. The sequence is that of Disheveled-associated activator of morphogenesis 2 from Gallus gallus (Chicken).